A 318-amino-acid polypeptide reads, in one-letter code: Deoxyribose-phosphate aldolase (318 aa).

The active-site Proton donor/acceptor is the Asp155. Residue Lys218 is the Schiff-base intermediate with acetaldehyde of the active site. Lys254 acts as the Proton donor/acceptor in catalysis.

This sequence belongs to the DeoC/FbaB aldolase family. DeoC type 2 subfamily. Interacts with YBX1. As to expression, mainly expressed in liver, lung and colon.

The protein localises to the cytoplasm. It localises to the cytoplasmic granule. The protein resides in the nucleus. The enzyme catalyses 2-deoxy-D-ribose 5-phosphate = D-glyceraldehyde 3-phosphate + acetaldehyde. The protein operates within carbohydrate degradation; 2-deoxy-D-ribose 1-phosphate degradation; D-glyceraldehyde 3-phosphate and acetaldehyde from 2-deoxy-alpha-D-ribose 1-phosphate: step 2/2. Catalyzes a reversible aldol reaction between acetaldehyde and D-glyceraldehyde 3-phosphate to generate 2-deoxy-D-ribose 5-phosphate. Participates in stress granule (SG) assembly. May allow ATP production from extracellular deoxyinosine in conditions of energy deprivation. The chain is Deoxyribose-phosphate aldolase (DERA) from Homo sapiens (Human).